Here is an 821-residue protein sequence, read N- to C-terminus: Ent-pimara-8(14),15-diene synthase (821 aa).

Residues D556, D560, N701, T705, and E709 each coordinate Mg(2+). The short motif at 556-560 (DDFFD) is the DDXXD motif element.

It belongs to the terpene synthase family. Mg(2+) serves as cofactor. Highly expressed in roots, at intermediate levels in stems and at lower levels in leaves.

It catalyses the reaction ent-copalyl diphosphate = ent-pimara-8(14),15-diene + diphosphate. It functions in the pathway secondary metabolite biosynthesis; terpenoid biosynthesis. Involved in the biosynthesis of ent-kaurene diterpenoids natural products. Catalyzes the conversion of ent-copalyl diphosphate to ent-pimara-8(14),15-diene. This Oryza sativa subsp. japonica (Rice) protein is Ent-pimara-8(14),15-diene synthase.